Here is an 85-residue protein sequence, read N- to C-terminus: N.vectensis toxin 1 6 (85 aa).

A signal peptide spans 1 to 20 (MASFKIVIVCLALLVAVACA). A propeptide spanning residues 21–36 (RRRDMMSDDELDYHYS) is cleaved from the precursor. 3 cysteine pairs are disulfide-bonded: cysteine 42-cysteine 82, cysteine 44-cysteine 72, and cysteine 65-cysteine 83.

Belongs to the sea anemone sodium channel inhibitory toxin family. Type II subfamily. In terms of tissue distribution, expressed in ectodermal glands and in clumps outside of the extodermal layer. Is not expressed in nematocytes. In adult female tissues, shows similar expression levels in mesenteries (gametes-producing tissue), tentacles, pharynx and physa.

It localises to the secreted. Functionally, binds to site 3 of voltage-gated sodium channels and inhibits the inactivation process. Is highly active on DmNav1/TipE (drosophila) and is only extremely weakly active on rat Nav1.4-beta-1/SCN4A-SCN1B, and on human Nav1.5-beta-1/SCN5A-beta-1. This reveals high specificity for arthropod over mammalian channels. In vivo, when released into the medium, this recombinant toxin induces impaired swimming, paralysis and death of the crustacean A.nauplii within several hours. Also causes paralysis of cherry shrimps immediately after injection at very low doses. Its effect on zebrafish (D.rerio) larvae is also rapid, since it induces tail twitching accompanied by impaired swimming after 20 minutes and complete paralysis within 45 minutes. It has also been observed to cause death of zebrafish larvae within 1 hour. The sequence is that of N.vectensis toxin 1 6 from Nematostella vectensis (Starlet sea anemone).